We begin with the raw amino-acid sequence, 497 residues long: Bifunctional protein GlmU (497 aa).

The interval 1–241 (MSPETIGPAA…RWQVEGANDR (241 aa)) is pyrophosphorylase. Residues 14 to 17 (LAAG), Lys-28, Gln-81, 86 to 87 (GT), 112 to 114 (YGD), Gly-151, Glu-166, Asn-181, and Asn-239 contribute to the UDP-N-acetyl-alpha-D-glucosamine site. Asp-114 contributes to the Mg(2+) binding site. Asn-239 is a binding site for Mg(2+). Positions 242–262 (IQLSALAAEHNRRIIESWMRA) are linker. Residues 263-497 (GVTVVDPATT…QATIEEGKQA (235 aa)) are N-acetyltransferase. UDP-N-acetyl-alpha-D-glucosamine is bound by residues Arg-344 and Lys-362. Residue His-374 is the Proton acceptor of the active site. Residues Tyr-377 and Asn-388 each contribute to the UDP-N-acetyl-alpha-D-glucosamine site. Acetyl-CoA contacts are provided by residues 397–398 (NY), Ser-416, and Ala-434.

This sequence in the N-terminal section; belongs to the N-acetylglucosamine-1-phosphate uridyltransferase family. It in the C-terminal section; belongs to the transferase hexapeptide repeat family. In terms of assembly, homotrimer. Mg(2+) is required as a cofactor.

It localises to the cytoplasm. The catalysed reaction is alpha-D-glucosamine 1-phosphate + acetyl-CoA = N-acetyl-alpha-D-glucosamine 1-phosphate + CoA + H(+). It catalyses the reaction N-acetyl-alpha-D-glucosamine 1-phosphate + UTP + H(+) = UDP-N-acetyl-alpha-D-glucosamine + diphosphate. The protein operates within nucleotide-sugar biosynthesis; UDP-N-acetyl-alpha-D-glucosamine biosynthesis; N-acetyl-alpha-D-glucosamine 1-phosphate from alpha-D-glucosamine 6-phosphate (route II): step 2/2. It participates in nucleotide-sugar biosynthesis; UDP-N-acetyl-alpha-D-glucosamine biosynthesis; UDP-N-acetyl-alpha-D-glucosamine from N-acetyl-alpha-D-glucosamine 1-phosphate: step 1/1. It functions in the pathway bacterial outer membrane biogenesis; LPS lipid A biosynthesis. In terms of biological role, catalyzes the last two sequential reactions in the de novo biosynthetic pathway for UDP-N-acetylglucosamine (UDP-GlcNAc). The C-terminal domain catalyzes the transfer of acetyl group from acetyl coenzyme A to glucosamine-1-phosphate (GlcN-1-P) to produce N-acetylglucosamine-1-phosphate (GlcNAc-1-P), which is converted into UDP-GlcNAc by the transfer of uridine 5-monophosphate (from uridine 5-triphosphate), a reaction catalyzed by the N-terminal domain. The chain is Bifunctional protein GlmU from Paenarthrobacter aurescens (strain TC1).